A 142-amino-acid polypeptide reads, in one-letter code: MENKDIRKILPHRYPFLLVDRIIEIEEGKKAVGIKNVTANEPFFQGHFPDNPIMPGVLIVEALAQVAGIAVMNIEEFKGKLGLFTGIDKCRFKKVVRPGDQLVLEVLIDSIKMGLVKAKGVAKVGDEVAATAELMFIMTEEG.

The active site involves His47.

This sequence belongs to the thioester dehydratase family. FabZ subfamily.

It localises to the cytoplasm. The enzyme catalyses a (3R)-hydroxyacyl-[ACP] = a (2E)-enoyl-[ACP] + H2O. Its function is as follows. Involved in unsaturated fatty acids biosynthesis. Catalyzes the dehydration of short chain beta-hydroxyacyl-ACPs and long chain saturated and unsaturated beta-hydroxyacyl-ACPs. The sequence is that of 3-hydroxyacyl-[acyl-carrier-protein] dehydratase FabZ from Thermoanaerobacter pseudethanolicus (strain ATCC 33223 / 39E) (Clostridium thermohydrosulfuricum).